The following is a 339-amino-acid chain: MTKIAVLGNGSWGSVLGSMLADNGNDVTLYGNIESVNEEINKTHTNSHYMKDWKLNENAKATGDLEEALNGAELVLFVLPTKAVRIVAKNVRKVLDKTGAKPLLVTATKGIEPGTKKLISEILTEEVYPNDEDKIVAISGPSHAENVAQKDLTAIACASTDEENAKKVQKIFSNDYVRFYTNDDLVGVEVGGAVKNVIAIAAGILVGQGYGDDAKAALMTRGLAEITRLGVNYFGAKPMTFSGLSGIGDLIVTCTSVNSRNWRAGKQIGEGKSLDYVLKNMGQVVEGATTVKAVHELSEEKNIDMPICDAIYRVLYENTDVAEEIKQMMGRDPKPEIRL.

3 residues coordinate NADPH: Ser11, Trp12, and Lys109. Sn-glycerol 3-phosphate-binding residues include Lys109, Gly140, and Ser142. Ala144 provides a ligand contact to NADPH. The sn-glycerol 3-phosphate site is built by Lys195, Asp249, Ser259, Arg260, and Asn261. Catalysis depends on Lys195, which acts as the Proton acceptor. An NADPH-binding site is contributed by Arg260. NADPH-binding residues include Val284 and Glu286.

Belongs to the NAD-dependent glycerol-3-phosphate dehydrogenase family.

Its subcellular location is the cytoplasm. It catalyses the reaction sn-glycerol 3-phosphate + NAD(+) = dihydroxyacetone phosphate + NADH + H(+). The enzyme catalyses sn-glycerol 3-phosphate + NADP(+) = dihydroxyacetone phosphate + NADPH + H(+). It participates in membrane lipid metabolism; glycerophospholipid metabolism. Functionally, catalyzes the reduction of the glycolytic intermediate dihydroxyacetone phosphate (DHAP) to sn-glycerol 3-phosphate (G3P), the key precursor for phospholipid synthesis. This is Glycerol-3-phosphate dehydrogenase [NAD(P)+] from Lactobacillus helveticus (strain DPC 4571).